The sequence spans 444 residues: Methylenetetrahydrofolate--tRNA-(uracil-5-)-methyltransferase TrmFO (444 aa).

9-14 (GAGLAG) serves as a coordination point for FAD.

The protein belongs to the MnmG family. TrmFO subfamily. Requires FAD as cofactor.

It localises to the cytoplasm. The catalysed reaction is uridine(54) in tRNA + (6R)-5,10-methylene-5,6,7,8-tetrahydrofolate + NADH + H(+) = 5-methyluridine(54) in tRNA + (6S)-5,6,7,8-tetrahydrofolate + NAD(+). The enzyme catalyses uridine(54) in tRNA + (6R)-5,10-methylene-5,6,7,8-tetrahydrofolate + NADPH + H(+) = 5-methyluridine(54) in tRNA + (6S)-5,6,7,8-tetrahydrofolate + NADP(+). In terms of biological role, catalyzes the folate-dependent formation of 5-methyl-uridine at position 54 (M-5-U54) in all tRNAs. The sequence is that of Methylenetetrahydrofolate--tRNA-(uracil-5-)-methyltransferase TrmFO from Koribacter versatilis (strain Ellin345).